The primary structure comprises 217 residues: Deoxyribose-phosphate aldolase (217 aa).

Asp-90 acts as the Proton donor/acceptor in catalysis. Lys-152 (schiff-base intermediate with acetaldehyde) is an active-site residue. The active-site Proton donor/acceptor is the Lys-181.

Belongs to the DeoC/FbaB aldolase family. DeoC type 1 subfamily.

The protein resides in the cytoplasm. The catalysed reaction is 2-deoxy-D-ribose 5-phosphate = D-glyceraldehyde 3-phosphate + acetaldehyde. Its pathway is carbohydrate degradation; 2-deoxy-D-ribose 1-phosphate degradation; D-glyceraldehyde 3-phosphate and acetaldehyde from 2-deoxy-alpha-D-ribose 1-phosphate: step 2/2. Its function is as follows. Catalyzes a reversible aldol reaction between acetaldehyde and D-glyceraldehyde 3-phosphate to generate 2-deoxy-D-ribose 5-phosphate. This is Deoxyribose-phosphate aldolase from Metamycoplasma hominis (Mycoplasma hominis).